The primary structure comprises 71 residues: Large ribosomal subunit protein uL29 (71 aa).

This sequence belongs to the universal ribosomal protein uL29 family.

In Halobacterium salinarum (strain ATCC 700922 / JCM 11081 / NRC-1) (Halobacterium halobium), this protein is Large ribosomal subunit protein uL29 (rpl29).